A 155-amino-acid polypeptide reads, in one-letter code: Small ribosomal subunit protein uS7cz/uS7cy (155 aa).

The protein belongs to the universal ribosomal protein uS7 family. Part of the 30S ribosomal subunit.

Its subcellular location is the plastid. It localises to the chloroplast. Functionally, one of the primary rRNA binding proteins, it binds directly to 16S rRNA where it nucleates assembly of the head domain of the 30S subunit. In Jasminum nudiflorum (Winter jasmine), this protein is Small ribosomal subunit protein uS7cz/uS7cy (rps7-A).